A 490-amino-acid chain; its full sequence is ATP synthase subunit beta (490 aa).

Position 175–182 (175–182) interacts with ATP; that stretch reads GGAGVGKT.

This sequence belongs to the ATPase alpha/beta chains family. As to quaternary structure, F-type ATPases have 2 components, CF(1) - the catalytic core - and CF(0) - the membrane proton channel. CF(1) has five subunits: alpha(3), beta(3), gamma(1), delta(1), epsilon(1). CF(0) has three main subunits: a(1), b(2) and c(9-12). The alpha and beta chains form an alternating ring which encloses part of the gamma chain. CF(1) is attached to CF(0) by a central stalk formed by the gamma and epsilon chains, while a peripheral stalk is formed by the delta and b chains.

It localises to the cell membrane. It carries out the reaction ATP + H2O + 4 H(+)(in) = ADP + phosphate + 5 H(+)(out). Produces ATP from ADP in the presence of a proton gradient across the membrane. The catalytic sites are hosted primarily by the beta subunits. The polypeptide is ATP synthase subunit beta (Acidothermus cellulolyticus (strain ATCC 43068 / DSM 8971 / 11B)).